Here is a 1180-residue protein sequence, read N- to C-terminus: Integrin alpha-1 (1180 aa).

The signal sequence occupies residues 1-28 (MVPRRPASLEVTVACIWLLTVILGFCVS). Residues 29-1142 (FNVDVKNSMS…SKDGLPGRVP (1114 aa)) are Extracellular-facing. The stretch at 30–91 (NVDVKNSMSF…CPVGRERAMP (62 aa)) is one FG-GAP 1 repeat. An intrachain disulfide couples cysteine 82 to cysteine 92. N-linked (GlcNAc...) asparagine glycans are attached at residues asparagine 100, asparagine 105, asparagine 112, asparagine 217, asparagine 317, asparagine 341, asparagine 402, asparagine 418, and asparagine 459. The stretch at 101–160 (TSIPNVTEIKENMTFGSTLVTNPNGGFLACGPLYAYRCGHLHYTTGICSDVSPTFQVVNS) is one FG-GAP 2 repeat. Residues 175–364 (IVLDGSNSIY…LGERIFALEA (190 aa)) enclose the VWFA domain. One copy of the FG-GAP 3 repeat lies at 365-417 (TADQSAASFEMEMSQTGFSAHYSQDWVMLGAVGAYDWNGTVVMQKANQMVIPH). FG-GAP repeat units lie at residues 422-474 (QTEP…DGNI), 475-537 (NILQ…RFEY), 556-614 (SCTK…TIRE), and 618-678 (QRIP…FEPN). Ca(2+)-binding residues include aspartate 497, aspartate 499, aspartate 501, and aspartate 505. Asparagine 531 carries an N-linked (GlcNAc...) asparagine glycan. Ca(2+)-binding residues include aspartate 579, asparagine 581, aspartate 583, aspartate 587, aspartate 641, asparagine 643, aspartate 645, and aspartate 649. An intrachain disulfide couples cysteine 687 to cysteine 696. N-linked (GlcNAc...) asparagine glycans are attached at residues asparagine 698, asparagine 747, and asparagine 779. A disulfide bridge links cysteine 702 with cysteine 755. Cysteine 807 and cysteine 813 form a disulfide bridge. Residues asparagine 820, asparagine 839, asparagine 882, asparagine 907, asparagine 938, asparagine 965, asparagine 973, and asparagine 1007 are each glycosylated (N-linked (GlcNAc...) asparagine). Cysteine 877 and cysteine 885 form a disulfide bridge. Cystine bridges form between cysteine 1029/cysteine 1062 and cysteine 1066/cysteine 1073. Residues asparagine 1084, asparagine 1103, and asparagine 1114 are each glycosylated (N-linked (GlcNAc...) asparagine). The chain crosses the membrane as a helical span at residues 1143 to 1165 (LWVILLSAFAGLLLLMLLILALW). Residues 1166–1180 (KIGFFKRPLKKKMEK) lie on the Cytoplasmic side of the membrane. The GFFKR motif signature appears at 1168–1172 (GFFKR).

The protein belongs to the integrin alpha chain family. Heterodimer of an alpha and a beta subunit. Alpha-1 associates with beta-1. Interacts with RAB21. Interacts (via cytoplasmic domain) with PTPN2; activates PTPN2 phosphatase activity towards EGFR and negatively regulates EGF signaling.

The protein localises to the membrane. Functionally, integrin alpha-1/beta-1 is a receptor for laminin and collagen. It recognizes the proline-hydroxylated sequence G-F-P-G-E-R in collagen. Involved in anchorage-dependent, negative regulation of EGF-stimulated cell growth. The protein is Integrin alpha-1 (Itga1) of Rattus norvegicus (Rat).